Here is a 224-residue protein sequence, read N- to C-terminus: Ribose-5-phosphate isomerase A (224 aa).

Residues 32-35 (TGST), 85-88 (DGAD), and 98-101 (KGGG) contribute to the substrate site. The Proton acceptor role is filled by Glu-107. Residue Lys-125 coordinates substrate.

It belongs to the ribose 5-phosphate isomerase family. In terms of assembly, homodimer.

It carries out the reaction aldehydo-D-ribose 5-phosphate = D-ribulose 5-phosphate. It participates in carbohydrate degradation; pentose phosphate pathway; D-ribose 5-phosphate from D-ribulose 5-phosphate (non-oxidative stage): step 1/1. Catalyzes the reversible conversion of ribose-5-phosphate to ribulose 5-phosphate. This Pseudomonas putida (strain W619) protein is Ribose-5-phosphate isomerase A.